The chain runs to 490 residues: Glutamate--tRNA ligase (490 aa).

Positions 9 to 19 (PSPTGLQHIGG) match the 'HIGH' region motif. Residues 251 to 255 (KLSKR) carry the 'KMSKS' region motif. Residue Lys-254 participates in ATP binding.

Belongs to the class-I aminoacyl-tRNA synthetase family. Glutamate--tRNA ligase type 1 subfamily. As to quaternary structure, monomer.

The protein resides in the cytoplasm. The enzyme catalyses tRNA(Glu) + L-glutamate + ATP = L-glutamyl-tRNA(Glu) + AMP + diphosphate. Functionally, catalyzes the attachment of glutamate to tRNA(Glu) in a two-step reaction: glutamate is first activated by ATP to form Glu-AMP and then transferred to the acceptor end of tRNA(Glu). In Borreliella burgdorferi (strain ATCC 35210 / DSM 4680 / CIP 102532 / B31) (Borrelia burgdorferi), this protein is Glutamate--tRNA ligase.